We begin with the raw amino-acid sequence, 383 residues long: F-box/kelch-repeat protein At4g19330 (383 aa).

The interval 1-27 (MAYLSFKSNMERTPRESNTPCPPPQPS) is disordered. One can recognise an F-box domain in the interval 28–79 (PSLFSSLPDDIVLNILARISTSYYQTLSLVSKTFRLLILSKELDMERSYLGT). Kelch repeat units lie at residues 147-192 (ETYE…VLDG), 193-239 (KLYV…NIQT), and 272-318 (STCE…SEIG).

In terms of biological role, involved in seed germination. The polypeptide is F-box/kelch-repeat protein At4g19330 (Arabidopsis thaliana (Mouse-ear cress)).